The sequence spans 427 residues: MHAWPAPEVPELPGHGSAVRLHDTAAQGLVPTPAAAPGEAARIYVCGITPYDATHMGHANTYLTFDLIQRAWLDAGHPVSYVQNVTDVDDPLLERAAATGRDWEALAESETALFREDMTALRILPPQHYVGAVESIPLVVDLVVKLLERGAAYDVDGDVYFSVHADPAFGAVAHLDAPEMLTTFGERGGDPGRPGKKDPLDCLLWQAEREGEPSWEPGEQARAAGLKPGRPGWHIECAAIALEHLGMGIDLQGGGSDLAFPHHEMGASEAQVVTGQRPYAHSYVHSGMVGLDGEKMSKSKGNLVLVSKLRHAGVDPMAIRLALLAHHYRTDWEWTDADLVSAVARLARWRAAVSRPDGVPADDVLDAVRARIADDLDAPGALAVIDAWVARQEAADGDDTAAASAQRNTAAPGQISRITDALLGVAL.

C46 lines the Zn(2+) pocket. L-cysteinyl-5'-AMP is bound by residues 46 to 49, T61, and 84 to 86; these read CGIT and NVT. A 'HIGH' region motif is present at residues 48–58; sequence ITPYDATHMGH. The 'ERGGDP' region signature appears at 186 to 191; that stretch reads ERGGDP. An L-cysteinyl-5'-AMP-binding site is contributed by W233. Residue C237 coordinates Zn(2+). Residue 255 to 257 coordinates L-cysteinyl-5'-AMP; sequence GSD. H262 contacts Zn(2+). L-cysteinyl-5'-AMP is bound at residue V289. The 'KMSKS' region signature appears at 295 to 299; sequence KMSKS.

The protein belongs to the class-I aminoacyl-tRNA synthetase family. MshC subfamily. In terms of assembly, monomer. Requires Zn(2+) as cofactor.

The enzyme catalyses 1D-myo-inositol 2-amino-2-deoxy-alpha-D-glucopyranoside + L-cysteine + ATP = 1D-myo-inositol 2-(L-cysteinylamino)-2-deoxy-alpha-D-glucopyranoside + AMP + diphosphate + H(+). Its function is as follows. Catalyzes the ATP-dependent condensation of GlcN-Ins and L-cysteine to form L-Cys-GlcN-Ins. This Catenulispora acidiphila (strain DSM 44928 / JCM 14897 / NBRC 102108 / NRRL B-24433 / ID139908) protein is L-cysteine:1D-myo-inositol 2-amino-2-deoxy-alpha-D-glucopyranoside ligase.